The following is a 144-amino-acid chain: Large ribosomal subunit protein uL15 (144 aa).

The disordered stretch occupies residues 1–53; it reads MRLNTLSPAEGAKHSAKRLGRGIGSGLGKTGGRGHKGQKSRTGGGVRRGFEGG. The span at 21-31 shows a compositional bias: gly residues; it reads RGIGSGLGKTG.

Belongs to the universal ribosomal protein uL15 family. Part of the 50S ribosomal subunit.

Binds to the 23S rRNA. The polypeptide is Large ribosomal subunit protein uL15 (Pasteurella multocida (strain Pm70)).